The chain runs to 114 residues: Immunomodulatory protein FIP-Fve (114 aa).

Residue Ser-1 is modified to N-acetylserine.

This sequence belongs to the fungal immunomodulatory protein (FIP) family. Homodimer.

Its function is as follows. Lectin with specificity for complex cell-surface carbohydrates. Possesses immunomodulatory activity, stimulates lymphocyte mitogenesis, suppresses systemic anaphylaxis reactions and edema, enhances transcription of IL-2, IFN-gamma and TNF-alpha and hemagglutinates red blood cells. The polypeptide is Immunomodulatory protein FIP-Fve (Flammulina velutipes (Agaricus velutipes)).